A 543-amino-acid polypeptide reads, in one-letter code: Intermediate filament protein ifb-2 (543 aa).

A compositionally biased stretch (polar residues) spans 1 to 10 (MSAVSYSMHR). A disordered region spans residues 1–27 (MSAVSYSMHRTTTTTSSSSHGGVSAGH). Positions 1–42 (MSAVSYSMHRTTTTTSSSSHGGVSAGHAAEEFVASAEREKQE) are head. Positions 39 to 388 (EKQEMQQLNS…KLVESEEGRF (350 aa)) constitute an IF rod domain. A coil 1A region spans residues 43-74 (MQQLNSRLEVYISRVRQLEDRNKELVIELDTL). A linker 1 region spans residues 75–88 (RGSLGNDIGQIKFK). A coil 1B region spans residues 89-223 (FNDSLVKVRR…RIHSQEITEL (135 aa)). Positions 224–240 (RTLLAQAPADTREFFKN) are linker 12. The interval 241-387 (ELALAIREIK…RKLVESEEGR (147 aa)) is coil 2. The segment at 388–542 (FTHVGQGVVV…SHIQTTVASS (155 aa)) is tail. In terms of domain architecture, LTD spans 420–538 (TRSSFKRHAK…IEKASHIQTT (119 aa)).

This sequence belongs to the intermediate filament family. Expression is restricted to a discrete circumferential subapical layer within the intestinal terminal web (known as the 'endotube'); this layer joins directly to the apical junction complexes that connect adjacent gut cells.

The protein localises to the cytoplasm. Its function is as follows. Cytoplasmic intermediate filaments provide mechanical strength to cells. Not essential protein. Component of the terminal web (organelle-depleted, intermediate filament-rich layer of cytoplasm that underlies the apical microvilli of polarized epithelial cells) in embryonic through to adult gut cells. Correct localization of filaments requires let-413. In Caenorhabditis elegans, this protein is Intermediate filament protein ifb-2 (ifb-2).